Reading from the N-terminus, the 298-residue chain is MSGELANYKRLEKVGEGTYGVVYKALDLRPGQGQRVVALKKIRLESEDEGVPSTAIREISLLKELKDDNIVRLYDIVHSDAHKLYLVFEFLDLDLKRYMEGIPKDQPLGADIVKKFMMQLCKGIAYCHSHRILHRDLKPQNLLINKDGNLKLGDFGLARAFGVPLRAYTHEIVTLWYRAPEVLLGGKQYSTGVDTWSIGCIFAEMCNRKPIFSGDSEIDQIFKIFRVLGTPNEAIWPDIVYLPDFKPSFPQWRRKDLSQVVPSLDPRGIDLLDKLLAYDPINRISARRAAIHPYFQES.

An N-acetylserine modification is found at Ser2. The Protein kinase domain occupies 8-295 (YKRLEKVGEG…ARRAAIHPYF (288 aa)). Residues 14–22 (VGEGTYGVV) and Lys40 contribute to the ATP site. Residue Tyr19 is modified to Phosphotyrosine. Asp136 acts as the Proton acceptor in catalysis. Thr169 carries the post-translational modification Phosphothreonine.

It belongs to the protein kinase superfamily. CMGC Ser/Thr protein kinase family. CDC2/CDKX subfamily. As to quaternary structure, forms a stable but non-covalent complex with the CKS1 protein and with a cyclin.

It carries out the reaction L-seryl-[protein] + ATP = O-phospho-L-seryl-[protein] + ADP + H(+). The catalysed reaction is L-threonyl-[protein] + ATP = O-phospho-L-threonyl-[protein] + ADP + H(+). Phosphorylation at Thr-18 or Tyr-19 inactivates the enzyme, while phosphorylation at Thr-169 activates it. Cyclin-dependent kinase that acts as a master regulator of the mitotic and meiotic cell cycles. Required to drive the G1-S transition. More than 200 substrates have been identified. Substrate specificity is in part regulated by the bound cyclin protein. Phosphorylates YTA7 during S-phase to promote transcription of histones. May phosphorylate CNN1, to contribute to the enrichment of CNN1 on anaphase kinetochores. The sequence is that of Cyclin-dependent kinase 1 from Saccharomyces cerevisiae (strain ATCC 204508 / S288c) (Baker's yeast).